We begin with the raw amino-acid sequence, 617 residues long: Isopropyl malate synthase gloH (617 aa).

Residues 47–325 (PIWLSTDLRD…ETGLDFSDLL (279 aa)) form the Pyruvate carboxyltransferase domain.

It belongs to the alpha-IPM synthase/homocitrate synthase family. LeuA type 2 subfamily.

It carries out the reaction 3-methyl-2-oxobutanoate + acetyl-CoA + H2O = (2S)-2-isopropylmalate + CoA + H(+). It participates in mycotoxin biosynthesis. Functionally, 2-isopropylmalate synthase; part of the gene cluster that mediates the biosynthesis of pneumocandins, lipohexapeptides of the echinocandin family that prevent fungal cell wall formation by non-competitive inhibition of beta-1,3-glucan synthase. The 10,12-dimethylmyristoyl side chain is synthesized by the reducing polyketide synthase gloL/GLPKS4. The thioesterase gloN/GLHYD exclusively interacts with gloL/GLPKS4 to maintain turnover of the polyketide side chain. The 10R,12S-dimethylmyristic acid is then transferred to the first thiolation domain of the nonribosomal peptide synthetase gloA/GLNRPS4 by the acyl-AMP ligase gloD/GLligase, followed by its acylation to L-ornithine to trigger elongation of the cyclic hexapeptide. L-ornithine, 4R-hydroxyl-L-proline (generated from L-proline by the dioxygenase gloF/GLOXY2), 3S-hydroxyl-L-homotyrosine (generated by gloG/GLHtyB, gloH/GLHtyA, gloI/GLHtyC, gloJ/GLHtyD and hydroxylated at C-3 by the dioxygenase gloM/GLOXY1), 3R-hydroxyl-L-glutamine (generated from L-glutamine probably by the dioxygenase gloE/GLOXY3) and 3S-hydroxyl-L-proline (generated from L-proline by the dioxygenase gloF/GLOXY2 to yield pneumocandin B0), or 3S-hydroxyl-4S-methyl-L-proline (generated from L-leucine by the dioxygenase gloC/GLOXY4 to yield pneumocandin A0) are sequentially added to the growing chain. The last C domain of gloA/GLNRPS4 is proposed to be responsible for cyclization by condensation to form the peptide bond between L-ornithine and 3S-hydroxyl-4S-methyl-L-proline (for pneumocandin A0) or 3S-hydroxyl-L-proline (for pneumocandin B0). Finally, the subsequent C-4 hydroxylation of 3S-hydroxyl-L-homotyrosine and L-ornithine dihydroxylation at C-4 and C-5 are performed by the cytochrome P450 monooxygenases gloP/GLP450-1 and gloO/GLP450-2, respectively. This Glarea lozoyensis (strain ATCC 20868 / MF5171) protein is Isopropyl malate synthase gloH.